Consider the following 172-residue polypeptide: Adenine phosphoribosyltransferase (172 aa).

Belongs to the purine/pyrimidine phosphoribosyltransferase family. As to quaternary structure, homodimer.

The protein localises to the cytoplasm. The catalysed reaction is AMP + diphosphate = 5-phospho-alpha-D-ribose 1-diphosphate + adenine. It participates in purine metabolism; AMP biosynthesis via salvage pathway; AMP from adenine: step 1/1. Its function is as follows. Catalyzes a salvage reaction resulting in the formation of AMP, that is energically less costly than de novo synthesis. This Clostridium botulinum (strain ATCC 19397 / Type A) protein is Adenine phosphoribosyltransferase.